A 249-amino-acid chain; its full sequence is 3-deoxy-manno-octulosonate cytidylyltransferase (249 aa).

It belongs to the KdsB family.

It is found in the cytoplasm. It catalyses the reaction 3-deoxy-alpha-D-manno-oct-2-ulosonate + CTP = CMP-3-deoxy-beta-D-manno-octulosonate + diphosphate. Its pathway is nucleotide-sugar biosynthesis; CMP-3-deoxy-D-manno-octulosonate biosynthesis; CMP-3-deoxy-D-manno-octulosonate from 3-deoxy-D-manno-octulosonate and CTP: step 1/1. It functions in the pathway bacterial outer membrane biogenesis; lipopolysaccharide biosynthesis. In terms of biological role, activates KDO (a required 8-carbon sugar) for incorporation into bacterial lipopolysaccharide in Gram-negative bacteria. This chain is 3-deoxy-manno-octulosonate cytidylyltransferase, found in Oleidesulfovibrio alaskensis (strain ATCC BAA-1058 / DSM 17464 / G20) (Desulfovibrio alaskensis).